The sequence spans 568 residues: Putative DEAD-box RNA helicase HEL64 (568 aa).

Positions 1–34 (MEETYSPFTGRQGQYNQGYNGGGRRDSRGGMGER) are disordered. Residues 23–34 (GRRDSRGGMGER) show a composition bias toward basic and acidic residues. The Q motif signature appears at 102 to 130 (FDHLCGIVPPYLLKKLTAQNFTAPTPVQA). A Helicase ATP-binding domain is found at 133–307 (WPVLLSGRDL…AEFQKQWIRI (175 aa)). ATP is bound at residue 146–153 (AKTGSGKT). The short motif at 255-258 (DEAD) is the DEAD box element. Residues 335 to 483 (ELRKLMQEHR…EIPDWMIEWN (149 aa)) form the Helicase C-terminal domain.

The protein belongs to the DEAD box helicase family. DDX5/DBP2 subfamily.

Its subcellular location is the nucleus. The catalysed reaction is ATP + H2O = ADP + phosphate + H(+). The protein is Putative DEAD-box RNA helicase HEL64 (HEL64) of Trypanosoma brucei brucei.